The sequence spans 248 residues: Phosphomannomutase (248 aa).

The Nucleophile role is filled by Asp-12. Residues Asp-12 and Asp-14 each coordinate Mg(2+). The active-site Proton donor/acceptor is the Asp-14. 6 residues coordinate alpha-D-mannose 1-phosphate: Arg-21, Arg-123, Arg-134, Arg-141, Ser-179, and Asp-181. Mg(2+)-binding residues include Asp-207, Phe-219, and Thr-224.

This sequence belongs to the eukaryotic PMM family. As to quaternary structure, homodimer. The cofactor is Mg(2+).

Its subcellular location is the cytoplasm. It carries out the reaction alpha-D-mannose 1-phosphate = D-mannose 6-phosphate. The protein operates within nucleotide-sugar biosynthesis; GDP-alpha-D-mannose biosynthesis; alpha-D-mannose 1-phosphate from D-fructose 6-phosphate: step 2/2. Catalyzes the interconversion of mannose-6-phosphate to mannose-1-phosphate, the precursor for the synthesis of GDP-mannose. GDP-mannose is an essential sugar nucleotide for the synthesis of D-mannose-containing cell wall polysaccharides (galactomannans and glucomannans), glycolipids, glycoproteins and the antioxidant L-ascorbate. In Spinacia oleracea (Spinach), this protein is Phosphomannomutase.